A 41-amino-acid chain; its full sequence is Antimicrobial protein PN-AMP1 (41 aa).

At Q1 the chain carries Pyrrolidone carboxylic acid. Positions 1 to 41 constitute a Chitin-binding type-1 domain; the sequence is QQCGRQASGRLCGNRLCCSQWGYCGSTASYCGAGCQSQCRS. 4 cysteine pairs are disulfide-bonded: C3–C18, C12–C24, C17–C31, and C35–C39.

Its function is as follows. Chitin-binding protein with a defensive function against numerous chitin containing fungal pathogens. It is also an inhibitor of Gram-positive bacteria such as B.subtilis. The protein is Antimicrobial protein PN-AMP1 of Ipomoea nil (Japanese morning glory).